Reading from the N-terminus, the 118-residue chain is MARIAGINIPDQKHTVIALTAIFGIGKTRSQAICAAAGIAENVKISELSEEQIETLRDEVAKYTVEGDLRREVTLSIKRLMDIGCYRGLRHRRGLPVRGQRTKTNARTRKGPRKPIKK.

Residues 94–118 form a disordered region; the sequence is GLPVRGQRTKTNARTRKGPRKPIKK.

Belongs to the universal ribosomal protein uS13 family. In terms of assembly, part of the 30S ribosomal subunit. Forms a loose heterodimer with protein S19. Forms two bridges to the 50S subunit in the 70S ribosome.

Functionally, located at the top of the head of the 30S subunit, it contacts several helices of the 16S rRNA. In the 70S ribosome it contacts the 23S rRNA (bridge B1a) and protein L5 of the 50S subunit (bridge B1b), connecting the 2 subunits; these bridges are implicated in subunit movement. Contacts the tRNAs in the A and P-sites. This Edwardsiella ictaluri (strain 93-146) protein is Small ribosomal subunit protein uS13.